A 239-amino-acid polypeptide reads, in one-letter code: Lipoprotein-releasing system ATP-binding protein LolD (239 aa).

An ABC transporter domain is found at I14–V239. Position 50-57 (G50–S57) interacts with ATP.

Belongs to the ABC transporter superfamily. Lipoprotein translocase (TC 3.A.1.125) family. As to quaternary structure, the complex is composed of two ATP-binding proteins (LolD) and two transmembrane proteins (LolC and LolE).

The protein localises to the cell inner membrane. Part of the ABC transporter complex LolCDE involved in the translocation of mature outer membrane-directed lipoproteins, from the inner membrane to the periplasmic chaperone, LolA. Responsible for the formation of the LolA-lipoprotein complex in an ATP-dependent manner. The chain is Lipoprotein-releasing system ATP-binding protein LolD from Xanthomonas campestris pv. campestris (strain 8004).